The primary structure comprises 435 residues: Glutamyl-tRNA reductase (435 aa).

Residues 49 to 52 (TCNR), serine 109, 114 to 116 (ETQ), and glutamine 120 contribute to the substrate site. Cysteine 50 functions as the Nucleophile in the catalytic mechanism. Residue 189-194 (GAGEMS) participates in NADP(+) binding.

Belongs to the glutamyl-tRNA reductase family. Homodimer.

The enzyme catalyses (S)-4-amino-5-oxopentanoate + tRNA(Glu) + NADP(+) = L-glutamyl-tRNA(Glu) + NADPH + H(+). It functions in the pathway porphyrin-containing compound metabolism; protoporphyrin-IX biosynthesis; 5-aminolevulinate from L-glutamyl-tRNA(Glu): step 1/2. In terms of biological role, catalyzes the NADPH-dependent reduction of glutamyl-tRNA(Glu) to glutamate 1-semialdehyde (GSA). The chain is Glutamyl-tRNA reductase from Listeria monocytogenes serotype 4b (strain CLIP80459).